Reading from the N-terminus, the 275-residue chain is Glucan endo-1,3-beta-glucosidase, acidic isoform PR-N (275 aa).

Catalysis depends on E196, which acts as the Nucleophile.

Belongs to the glycosyl hydrolase 17 family. The N-terminus is blocked.

Its subcellular location is the secreted. It localises to the extracellular space. It catalyses the reaction Hydrolysis of (1-&gt;3)-beta-D-glucosidic linkages in (1-&gt;3)-beta-D-glucans.. Its function is as follows. Implicated in the defense of plants against pathogens. The sequence is that of Glucan endo-1,3-beta-glucosidase, acidic isoform PR-N (PRN) from Nicotiana tabacum (Common tobacco).